We begin with the raw amino-acid sequence, 488 residues long: IQ domain-containing protein IQM1 (488 aa).

The segment at 20 to 46 is disordered; sequence RTNSFKRDDTNRHQNSPKSTMERSLSF. Residues 32-46 show a composition bias toward polar residues; that stretch reads HQNSPKSTMERSLSF. Residues 106 to 135 enclose the IQ domain; that stretch reads LDAAATTLQKVYKSYRTRRNLADCAVVVEE. 2 disordered regions span residues 377–403 and 448–472; these read SFKSTADEEEERKEVSEEVEIPSEKEE and SPRVSPANSYGPIPSPRPSPKVRVS. Residues 388–403 are compositionally biased toward basic and acidic residues; the sequence is RKEVSEEVEIPSEKEE.

Interacts (via IQ domain) with CAM5. In terms of tissue distribution, highly expressed in leaf mesophyll cells. Expressed in roots, rosette and cauline leaves, stems, flowers and siliques.

The protein localises to the cytoplasm. It localises to the nucleus. Involved in the modulation of stomatal movement. Promotes stomatal opening. May play a role in the regulation of chitin signaling. May be involved in biotic and abiotic stress responses. This is IQ domain-containing protein IQM1 from Arabidopsis thaliana (Mouse-ear cress).